A 62-amino-acid chain; its full sequence is Pro-MCH variant (62 aa).

Residues 23 to 41 form an NGE-like region; sequence GSVAFPAENGVQDTESTQE. The segment at 29–62 is disordered; the sequence is AENGVQDTESTQEKRETGDEENSAKFPIGRRDFD. The tract at residues 44–56 is NEI-like; the sequence is ETGDEENSAKFPI. A melanin-concentrating hormone-like region spans residues 60–62; that stretch reads DFD.

Belongs to the melanin-concentrating hormone family.

In Pan paniscus (Pygmy chimpanzee), this protein is Pro-MCH variant (PMCHL1).